The primary structure comprises 347 residues: NADH-ubiquinone oxidoreductase chain 2 (347 aa).

9 helical membrane passes run 3–23, 59–79, 93–115, 150–170, 178–198, 199–219, 242–262, 274–294, and 326–346; these read PLAL…TMMS, YFMT…INLM, VASN…HFWV, NTNL…WGGL, ILAY…PFNP, TLTL…FMIL, IMLM…GFMP, NSII…YFYM, and LPTL…ISML.

It belongs to the complex I subunit 2 family. In terms of assembly, core subunit of respiratory chain NADH dehydrogenase (Complex I) which is composed of 45 different subunits. Interacts with TMEM242.

It localises to the mitochondrion inner membrane. The enzyme catalyses a ubiquinone + NADH + 5 H(+)(in) = a ubiquinol + NAD(+) + 4 H(+)(out). In terms of biological role, core subunit of the mitochondrial membrane respiratory chain NADH dehydrogenase (Complex I) which catalyzes electron transfer from NADH through the respiratory chain, using ubiquinone as an electron acceptor. Essential for the catalytic activity and assembly of complex I. The sequence is that of NADH-ubiquinone oxidoreductase chain 2 from Loxodonta africana (African elephant).